Here is a 289-residue protein sequence, read N- to C-terminus: Probable 2-keto-3-deoxyxylonate dehydratase (289 aa).

The Mg(2+) site is built by Glu-144, Glu-146, and Asp-164.

This sequence belongs to the FAH family.

It carries out the reaction 2-dehydro-3-deoxy-D-arabinonate = 2,5-dioxopentanoate + H2O. It participates in carbohydrate metabolism; D-xylose degradation. In terms of biological role, probable 2-keto-3-deoxyxylonate dehydratase involved in the degradation of D-xylose, a major component of hemicelluloses such as xylan. Catalyzes the fourth reaction in the xylose utilization pathway through dehydratation of 2-dehydro-3-deoxy-D-xylonate into alpha-ketoglutarate semialdehyde (2,5-dioxopentanoate). The chain is Probable 2-keto-3-deoxyxylonate dehydratase from Haloferax volcanii (strain ATCC 29605 / DSM 3757 / JCM 8879 / NBRC 14742 / NCIMB 2012 / VKM B-1768 / DS2) (Halobacterium volcanii).